A 648-amino-acid chain; its full sequence is Transcription termination factor FttA (648 aa).

The segment at 1 to 179 is not required for dimerization, required for cleavage at some sites; the sequence is MIKRETQVDQ…QVGRNIYRKP (179 aa). Residues 9 to 76 form a KHa region; it reads DQILKDIRGI…ISIRPDPDVL (68 aa). The segment at 77–144 is KHb; it reads LPPEEAEKLI…WAPKVVRTPP (68 aa). Residues 185–395 form a metallo-beta-lactamase N-terminus region; that stretch reads WIRITGLGGF…LVMESTYGGA (211 aa). Residues His253, His255, Asp257, His258, His341, and Asp364 each contribute to the Zn(2+) site. Residues 396–589 are beta-Casp; the sequence is NDIQMPREEA…MEVHTIDGFS (194 aa). The interval 590-648 is metallo-beta-lactamase C-terminus; the sequence is GHADRRELMNYVAKVRPRPERVITVHGEPQKCLDLATSIHRKFGLSTRAPNNLDTIRLR. His615 contributes to the Zn(2+) binding site.

Belongs to the metallo-beta-lactamase superfamily. RNA-metabolizing metallo-beta-lactamase-like family. FttA subfamily. Homodimer. Interacts with RNA polymerase (RNAP), interacts with the Spt4-Spt5 complex. Requires Zn(2+) as cofactor.

EndoRNase activity is inhibited by 1,10-phenanthroline. In terms of biological role, terminates transcription on the whole genome. Termination is linked to FttA-mediated RNA cleavage and does not require NTP hydrolysis. Cleaves endonucleolytically at the RNA exit channel of RNA polymerase (RNAP); the 5'-3' exonuclease activity of this protein degrades the nascent RNA released from RNAP. A single-stranded endoribonuclease (endoRNase) with a preference for cleavage at CA dinucleotides. Has 5'-3' exoribonuclease (exoRNase) activity on 5'-monophosphorylated RNA; this activity does not occur on 5'-tri-phosphorylated or 5'-OH substrates. Also has weak activity 5'-3' exodeoxyribonuclease activity on ssDNA. This is Transcription termination factor FttA from Pyrococcus abyssi (strain GE5 / Orsay).